Reading from the N-terminus, the 395-residue chain is Scyllo-inosose 3-dehydrogenase (395 aa).

A Zn(2+)-binding site is contributed by Cys-66. Active-site charge relay system residues include Ser-68 and His-71. Positions 95, 96, 131, 134, 137, 145, and 193 each coordinate Zn(2+). Residues Ile-223, Glu-243, and Arg-248 each contribute to the NAD(+) site.

It belongs to the zinc-containing alcohol dehydrogenase family. In terms of assembly, homodimer. Zn(2+) is required as a cofactor.

It carries out the reaction scyllo-inosose + NAD(+) = 3-dehydro-scyllo-inosose + NADH + H(+). It functions in the pathway polyol metabolism; myo-inositol metabolism. Its function is as follows. Catalyzes the NAD(+)-dependent oxidation of scyllo-inosose (2-keto-myo-inositol) to 3-dehydro-scyllo-inosose (diketo-inositol), and thus probably functions in a myo-inositol degradation pathway together with IolG, IolN and IolO. Has no activity on myo-inositol, D-chiro-inositol and 1-keto-D-chiro-inositol. The chain is Scyllo-inosose 3-dehydrogenase from Thermotoga maritima (strain ATCC 43589 / DSM 3109 / JCM 10099 / NBRC 100826 / MSB8).